A 142-amino-acid chain; its full sequence is Large ribosomal subunit protein uL11 (142 aa).

Residues 84–103 form a disordered region; the sequence is AGVKSGSGRPNSDKVGTVTD.

This sequence belongs to the universal ribosomal protein uL11 family. In terms of assembly, part of the ribosomal stalk of the 50S ribosomal subunit. Interacts with L10 and the large rRNA to form the base of the stalk. L10 forms an elongated spine to which L12 dimers bind in a sequential fashion forming a multimeric L10(L12)X complex. In terms of processing, one or more lysine residues are methylated.

Its function is as follows. Forms part of the ribosomal stalk which helps the ribosome interact with GTP-bound translation factors. In Aliivibrio salmonicida (strain LFI1238) (Vibrio salmonicida (strain LFI1238)), this protein is Large ribosomal subunit protein uL11.